The chain runs to 1728 residues: Nebulin-related-anchoring protein (1728 aa).

Residues Gln4–Phe64 enclose the LIM zinc-binding domain. 41 Nebulin repeats span residues Thr173–Ser200, Thr201–Gly235, Thr244–Lys271, Thr313–Gly340, His345–Gly379, Glu386–Arg414, His416–Val450, Lys484–Leu518, Asn519–Gly553, Gly555–Gly589, Leu599–Thr623, His624–Val658, Leu659–Gly689, Asn699–Glu721, Lys723–His757, Gln758–Ala792, Gly794–Gly828, Gln841–Ser866, Gln867–Arg893, Cys898–Gly932, Val943–Gln960, Lys966–His1000, His1001–Asp1035, Gly1037–Gly1071, Gly1075–Ala1109, His1110–Arg1136, Gln1141–Gly1175, Val1180–Gln1203, Lys1209–His1243, Gln1244–Ala1278, Gly1280–Gly1314, Gly1318–Ala1352, Gln1353–Arg1379, Glu1384–Gly1418, Gln1425–Lys1446, Lys1452–Arg1478, Arg1487–Ala1521, Gly1523–Gly1557, Gly1561–Ser1595, Gln1596–Ser1630, and Leu1637–Gly1661. A Phosphothreonine modification is found at Thr203. Ser1078 carries the phosphoserine modification.

As to quaternary structure, interacts with actin, alpha-actinin, KLHL41, TLN1 and VCL. Interacts with CSRP3. As to expression, expressed in cardiac and skeletal muscle. Not detected in kidney, spleen, liver, brain, lung, stomach or uterus.

May be involved in anchoring the terminal actin filaments in the myofibril to the membrane and in transmitting tension from the myofibrils to the extracellular matrix. The sequence is that of Nebulin-related-anchoring protein from Mus musculus (Mouse).